The chain runs to 87 residues: MANIKSAKKRAVQSEKARKHNASRRSMMRTFIKKVYAAIEAGDKAAALKAFNEMQPIVDRQAAKGLIHKNKAARHKANLTAQINKLA.

A disordered region spans residues 1–26; that stretch reads MANIKSAKKRAVQSEKARKHNASRRS.

It belongs to the bacterial ribosomal protein bS20 family.

In terms of biological role, binds directly to 16S ribosomal RNA. In Salmonella typhi, this protein is Small ribosomal subunit protein bS20.